The chain runs to 152 residues: Superoxide dismutase [Cu-Zn] 1 (152 aa).

Positions 45, 47, and 62 each coordinate Cu cation. A disulfide bond links C56 and C145. Residues H62, H70, H79, and D82 each contribute to the Zn(2+) site. H119 contacts Cu cation.

Belongs to the Cu-Zn superoxide dismutase family. In terms of assembly, homodimer. Cu cation serves as cofactor. The cofactor is Zn(2+).

It is found in the cytoplasm. It catalyses the reaction 2 superoxide + 2 H(+) = H2O2 + O2. Functionally, destroys radicals which are normally produced within the cells and which are toxic to biological systems. The sequence is that of Superoxide dismutase [Cu-Zn] 1 (SODCC.1) from Mesembryanthemum crystallinum (Common ice plant).